A 161-amino-acid chain; its full sequence is Arginine repressor (161 aa).

The protein belongs to the ArgR family.

The protein resides in the cytoplasm. It participates in amino-acid biosynthesis; L-arginine biosynthesis [regulation]. Regulates arginine biosynthesis genes. In Corynebacterium aurimucosum (strain ATCC 700975 / DSM 44827 / CIP 107346 / CN-1) (Corynebacterium nigricans), this protein is Arginine repressor.